A 172-amino-acid polypeptide reads, in one-letter code: Zinc finger protein 580 (172 aa).

A disordered region spans residues 1 to 92; that stretch reads MLLLPPRPPH…PGEPGPRKGY (92 aa). Residues 19–30 show a composition bias toward pro residues; sequence MDPPPPKTPPFP. K31 is covalently cross-linked (Glycyl lysine isopeptide (Lys-Gly) (interchain with G-Cter in SUMO2)). The C2H2-type 1 zinc-finger motif lies at 92-114; that stretch reads YSCPECARVFASPLRLQSHRVSH. Residue K118 forms a Glycyl lysine isopeptide (Lys-Gly) (interchain with G-Cter in SUMO2) linkage. 2 consecutive C2H2-type zinc fingers follow at residues 120 to 142 and 150 to 172; these read FTCG…RATH and HTCP…VRLH.

In terms of assembly, interacts with SMAD2.

Its subcellular location is the nucleus. Its function is as follows. Involved in the regulation of endothelial cell proliferation and migration. Mediates H(2)O(2)-induced leukocyte chemotaxis by elevating interleukin-8 production and may play a role in inflammation. May be involved in transcriptional regulation. In Mus musculus (Mouse), this protein is Zinc finger protein 580 (Znf580).